Here is an 87-residue protein sequence, read N- to C-terminus: MANIKSQKKRILTNEKARQRNQAIRSAVRTEIRKFRAAVAAGDKAAAEAQLRVASRALDKSVTKGVFHRNNAANKKSNMAHALNKMA.

It belongs to the bacterial ribosomal protein bS20 family.

Its function is as follows. Binds directly to 16S ribosomal RNA. The sequence is that of Small ribosomal subunit protein bS20 from Corynebacterium diphtheriae (strain ATCC 700971 / NCTC 13129 / Biotype gravis).